A 430-amino-acid polypeptide reads, in one-letter code: Peptidoglycan DD-endopeptidase ShyA (430 aa).

The first 35 residues, 1–35 (MISKSIILRFSELSMRKKATLVGLPLLAVAAISSS), serve as a signal peptide directing secretion. Residues His297, Asp301, and His378 each contribute to the Zn(2+) site.

The protein belongs to the peptidase M23B family. Requires Zn(2+) as cofactor.

The protein resides in the periplasm. It participates in cell wall degradation; peptidoglycan degradation. Reduced activity in 0.5 mM EDTA and a complete loss of activity at higher EDTA concentrations. The effect of EDTA can be reversed by addition of 1 mM ZnCl(2). Conformational switching between open (catalytically active) and closed (catalytically inactive) conformation of this protein is suggested mechanism of its regulation. The signal or inducer of the conformational shift to the open form unmasking the active site is currently not understood. Cell wall peptidoglycan (PG) DD-endopeptidase essential for cell growth and elongation. Hydrolyzes peptide cross-links which covalently connect adjacent PG strands probably to allow insertion of new glycans and thus cell wall expansion. Degrades purified whole PG sacculi in vitro. Releases predominantly short glycan chains from the PG. Cleaves D,D cross-linked muropeptides specifically preferring dimeric tetrapeptide-tetrapeptide (D44) substrates and has only little activity on dimeric tetrapeptide-pentapeptide (D45) substrates. Also converts more than 50% of tetrapeptide-tripeptide (D43) to product as well as more than 50% of D43M, which contains D-Met instead of D-Ala in the fourth position of the acceptor moiety. Cleaves the D,D bond between diaminopimelic acid (DAP) and D-Ala of the PG substrate in vitro. No cleavage of L,D bond connecting two DAP moieties. This is Peptidoglycan DD-endopeptidase ShyA from Vibrio cholerae serotype O1 (strain ATCC 39315 / El Tor Inaba N16961).